Reading from the N-terminus, the 378-residue chain is Mas-related G-protein coupled receptor MRG (378 aa).

Topologically, residues 1–77 (MVWGKICWFS…VGQQALPLNI (77 aa)) are extracellular. Residues Asn-54 and Asn-57 are each glycosylated (N-linked (GlcNAc...) asparagine). A helical membrane pass occupies residues 78-101 (IAPKAVLVSLCGVLLNGTVFWLLC). Over 102–109 (CGATNPYM) the chain is Cytoplasmic. A helical membrane pass occupies residues 110–136 (VYILHLVAADVIYLCCSAVGFLQVTLL). The Extracellular portion of the chain corresponds to 137 to 154 (TYHGVVFFIPDFLAILSP). A helical transmembrane segment spans residues 155–169 (FSFEVCLCLLVAIST). The Cytoplasmic segment spans residues 170 to 191 (ERCVCVLFPIWYRCHRPKYTSN). Residues 192 to 207 (VVCTLIWGLPFCINIV) form a helical membrane-spanning segment. Topologically, residues 208–221 (KSLFLTYWKHVKAC) are extracellular. Residues 222–248 (VIFLKLSGLFHAILSLVMCVSSLTLLI) form a helical membrane-spanning segment. Residues 249-264 (RFLCCSQQQKATRVYA) are Cytoplasmic-facing. A helical membrane pass occupies residues 265–286 (VVQISAPMFLLWALPLSVAPLI). Residues 287–297 (TDFKMFVTTSY) are Extracellular-facing. A helical membrane pass occupies residues 298–317 (LISLFLIINSSANPIIYFFV). The Cytoplasmic segment spans residues 318–378 (GSLRKKRLKE…PREHRVDVET (61 aa)). Residues 344–378 (GRNKKAAGIDPMEQPHSTQHVENLLPREHRVDVET) are disordered. Positions 368-378 (LPREHRVDVET) are enriched in basic and acidic residues.

It belongs to the G-protein coupled receptor 1 family. Mas subfamily.

It is found in the cell membrane. This Homo sapiens (Human) protein is Mas-related G-protein coupled receptor MRG (MAS1L).